Consider the following 126-residue polypeptide: MTDQATPNLPSRDFDSTAAFYERLGFGIVFRDAGWMILQRGDLMLEFFAHPGLDPLASWFSCCLRLDDLAEFYRQCKSVGIQETSSGYPRIHAPELQEWGGTMAALVDPDGTLLRLIQNELLAGIS.

Residues 1–119 (MTDQATPNLP…DGTLLRLIQN (119 aa)) enclose the VOC domain.

Belongs to the bleomycin resistance protein family.

Functionally, binding protein with a strong affinity to the bleomycin family of antibiotics. Binds to CL990; an antimitotic-antibiotic compound. In Klebsiella pneumoniae, this protein is Bleomycin resistance protein (ble).